Here is a 482-residue protein sequence, read N- to C-terminus: Adenylyltransferase and sulfurtransferase MOCS3-2 (482 aa).

ATP is bound by residues glycine 125, aspartate 146, 153–157 (NNLHR), lysine 170, and 214–215 (DN). Zn(2+)-binding residues include cysteine 255 and cysteine 258. Cysteine 272 (glycyl thioester intermediate; for adenylyltransferase activity) is an active-site residue. Residues cysteine 330 and cysteine 333 each coordinate Zn(2+). Residues 385-480 (DGEPHLLLDV…WGQDVDPDFP (96 aa)) form the Rhodanese domain. Cysteine 440 (cysteine persulfide intermediate; for sulfurtransferase activity) is an active-site residue.

This sequence in the N-terminal section; belongs to the HesA/MoeB/ThiF family. UBA4 subfamily. Zn(2+) serves as cofactor.

Its subcellular location is the cytoplasm. It carries out the reaction [molybdopterin-synthase sulfur-carrier protein]-C-terminal Gly-Gly + ATP + H(+) = [molybdopterin-synthase sulfur-carrier protein]-C-terminal Gly-Gly-AMP + diphosphate. It catalyses the reaction [molybdopterin-synthase sulfur-carrier protein]-C-terminal Gly-Gly-AMP + S-sulfanyl-L-cysteinyl-[cysteine desulfurase] + AH2 = [molybdopterin-synthase sulfur-carrier protein]-C-terminal-Gly-aminoethanethioate + L-cysteinyl-[cysteine desulfurase] + A + AMP + 2 H(+). The protein operates within tRNA modification; 5-methoxycarbonylmethyl-2-thiouridine-tRNA biosynthesis. Its pathway is cofactor biosynthesis; molybdopterin biosynthesis. Its function is as follows. Plays a central role in 2-thiolation of mcm(5)S(2)U at tRNA wobble positions of cytosolic tRNA(Lys), tRNA(Glu) and tRNA(Gln). Also essential during biosynthesis of the molybdenum cofactor. Acts by mediating the C-terminal thiocarboxylation of sulfur carriers URM1 and MOCS2A. Its N-terminus first activates URM1 and MOCS2A as acyl-adenylates (-COAMP), then the persulfide sulfur on the catalytic cysteine is transferred to URM1 and MOCS2A to form thiocarboxylation (-COSH) of their C-terminus. The reaction probably involves hydrogen sulfide that is generated from the persulfide intermediate and that acts as a nucleophile towards URM1 and MOCS2A. Subsequently, a transient disulfide bond is formed. Does not use thiosulfate as sulfur donor; NFS1 probably acting as a sulfur donor for thiocarboxylation reactions. This chain is Adenylyltransferase and sulfurtransferase MOCS3-2, found in Zea mays (Maize).